A 179-amino-acid polypeptide reads, in one-letter code: Inner membrane-spanning protein YciB (179 aa).

5 helical membrane passes run 22-42, 50-70, 76-96, 121-141, and 149-169; these read IYVA…FTWF, MTLI…VFHN, WKVT…QLVL, LAWA…AFWL, and FKVF…GVYI.

Belongs to the YciB family.

Its subcellular location is the cell inner membrane. In terms of biological role, plays a role in cell envelope biogenesis, maintenance of cell envelope integrity and membrane homeostasis. This is Inner membrane-spanning protein YciB from Serratia proteamaculans (strain 568).